The sequence spans 959 residues: Mitogen-activated protein kinase kinase kinase 13 (959 aa).

Residues 1–47 are disordered; it reads MANPQEHLSCSSLPHLPLTENKTSGGRNELAAMGNHPSPKLPEDPQE. Positions 7–18 are enriched in low complexity; that stretch reads HLSCSSLPHLPL. The Protein kinase domain occupies 167-408; the sequence is ISELQWLGSG…FRQTLMHLDI (242 aa). Residues 173–181 and lysine 194 each bind ATP; that span reads LGSGAQGAV. The active-site Proton acceptor is aspartate 278. 2 leucine-zipper regions span residues 432-453 and 485-506; these read VKKH…DEEL and LSAI…EQAV. 4 disordered regions span residues 533–599, 739–828, 842–902, and 927–959; these read KRKG…GSHS, GSLD…RQRP, SSEN…LSDK, and NPVQ…SATW. Residues 566 to 577 show a composition bias toward polar residues; that stretch reads SPLSGSPKMSTA. Positions 581 to 593 are enriched in basic residues; the sequence is SRYRSKPRHRRGN. Polar residues-rich tracts occupy residues 754–774 and 780–790; these read DLSS…SERT and SGCQSGISHQF. The segment covering 808–820 has biased composition (acidic residues); that stretch reads DSSEEEGEVDSEV. Basic and acidic residues predominate over residues 866 to 876; it reads SANRRQDRLAE. Residues 934–943 are compositionally biased toward acidic residues; that stretch reads SDCDSSEGEC. The segment covering 947–959 has biased composition (polar residues); that stretch reads TVRTSKNYSSATW.

Belongs to the protein kinase superfamily. STE Ser/Thr protein kinase family. MAP kinase kinase kinase subfamily. In terms of assembly, homodimer; forms dimers through the leucine-zipper motif. Interacts with the C-terminus of MAPK8IP1 through the kinase catalytic domain. Binds PRDX3. Associates with the IKK complex through the kinase domain. Mg(2+) serves as cofactor. Post-translationally, autophosphorylated on serine and threonine residues.

The protein resides in the cytoplasm. It is found in the membrane. It catalyses the reaction L-seryl-[protein] + ATP = O-phospho-L-seryl-[protein] + ADP + H(+). It carries out the reaction L-threonyl-[protein] + ATP = O-phospho-L-threonyl-[protein] + ADP + H(+). Activated by autophosphorylation and homodimerization. Functionally, activates the JUN N-terminal pathway through activation of the MAP kinase kinase MAP2K7. Acts synergistically with PRDX3 to regulate the activation of NF-kappa-B in the cytosol. This activation is kinase-dependent and involves activating the IKK complex, the IKBKB-containing complex that phosphorylates inhibitors of NF-kappa-B. The sequence is that of Mitogen-activated protein kinase kinase kinase 13 (Map3k13) from Mus musculus (Mouse).